We begin with the raw amino-acid sequence, 556 residues long: Formate--tetrahydrofolate ligase (556 aa).

An ATP-binding site is contributed by 65–72; the sequence is TPAGEGKT.

The protein belongs to the formate--tetrahydrofolate ligase family.

The catalysed reaction is (6S)-5,6,7,8-tetrahydrofolate + formate + ATP = (6R)-10-formyltetrahydrofolate + ADP + phosphate. The protein operates within one-carbon metabolism; tetrahydrofolate interconversion. This chain is Formate--tetrahydrofolate ligase, found in Agathobacter rectalis (strain ATCC 33656 / DSM 3377 / JCM 17463 / KCTC 5835 / VPI 0990) (Eubacterium rectale).